The primary structure comprises 85 residues: UPF0297 protein LBUL_1485 (85 aa).

The protein belongs to the UPF0297 family.

This Lactobacillus delbrueckii subsp. bulgaricus (strain ATCC BAA-365 / Lb-18) protein is UPF0297 protein LBUL_1485.